The following is a 359-amino-acid chain: S-adenosylmethionine:tRNA ribosyltransferase-isomerase (359 aa).

The protein belongs to the QueA family. In terms of assembly, monomer.

Its subcellular location is the cytoplasm. It carries out the reaction 7-aminomethyl-7-carbaguanosine(34) in tRNA + S-adenosyl-L-methionine = epoxyqueuosine(34) in tRNA + adenine + L-methionine + 2 H(+). It functions in the pathway tRNA modification; tRNA-queuosine biosynthesis. Functionally, transfers and isomerizes the ribose moiety from AdoMet to the 7-aminomethyl group of 7-deazaguanine (preQ1-tRNA) to give epoxyqueuosine (oQ-tRNA). This is S-adenosylmethionine:tRNA ribosyltransferase-isomerase from Synechococcus sp. (strain ATCC 27144 / PCC 6301 / SAUG 1402/1) (Anacystis nidulans).